A 199-amino-acid chain; its full sequence is Fe/S biogenesis protein NfuA (199 aa).

[4Fe-4S] cluster contacts are provided by cysteine 151 and cysteine 154.

It belongs to the NfuA family. As to quaternary structure, homodimer. [4Fe-4S] cluster serves as cofactor.

In terms of biological role, involved in iron-sulfur cluster biogenesis. Binds a 4Fe-4S cluster, can transfer this cluster to apoproteins, and thereby intervenes in the maturation of Fe/S proteins. Could also act as a scaffold/chaperone for damaged Fe/S proteins. The sequence is that of Fe/S biogenesis protein NfuA from Xylella fastidiosa (strain M12).